A 421-amino-acid polypeptide reads, in one-letter code: MQDQLDHELERIDKLPKLGLLWVEYSAYALGVNIAPRKRSSKYCRLTRILVLIVNLSIIYSLVAFIMENYMISFETYVEAVLLTFQLSVGVVKMFHFQNKVESCSQLVFSTETGEVLKSLGLFQLDLPRKKELLSSVSLILLNNWMIIDRQVMFFFKIVCMPVLYYCVRPYFQYIFDCYIKDKDTCEMTLTYPAIVPYLQLGNYEFPSYVIRFFLLQSGPLWCFFAVFGFNSLFVVLTRYESGLIKVLRFLVQNSTSDILVPKDQRVKYLQCCVRLFARISSHHNQIENLFKYIILVQCSVSSILICMLLYKISTVLEVGWVWMGMIMVYFVTIALEITLYNVSAQKVESQSELLFHDWYNCSWYNESREFKFMIKMMLLFSRRTFVLSVGGFTSLSHKFLVQVFRLSANFFLLLRNMNNK.

The Cytoplasmic portion of the chain corresponds to 1-48 (MQDQLDHELERIDKLPKLGLLWVEYSAYALGVNIAPRKRSSKYCRLTR). The helical transmembrane segment at 49–69 (ILVLIVNLSIIYSLVAFIMEN) threads the bilayer. Topologically, residues 70–71 (YM) are extracellular. The chain crosses the membrane as a helical span at residues 72–92 (ISFETYVEAVLLTFQLSVGVV). The Cytoplasmic segment spans residues 93 to 151 (KMFHFQNKVESCSQLVFSTETGEVLKSLGLFQLDLPRKKELLSSVSLILLNNWMIIDRQ). Residues 152-172 (VMFFFKIVCMPVLYYCVRPYF) form a helical membrane-spanning segment. Topologically, residues 173–217 (QYIFDCYIKDKDTCEMTLTYPAIVPYLQLGNYEFPSYVIRFFLLQ) are extracellular. Residues 218 to 238 (SGPLWCFFAVFGFNSLFVVLT) traverse the membrane as a helical segment. Topologically, residues 239-289 (RYESGLIKVLRFLVQNSTSDILVPKDQRVKYLQCCVRLFARISSHHNQIEN) are cytoplasmic. The helical transmembrane segment at 290 to 310 (LFKYIILVQCSVSSILICMLL) threads the bilayer. The Extracellular portion of the chain corresponds to 311–315 (YKIST). Residues 316-336 (VLEVGWVWMGMIMVYFVTIAL) form a helical membrane-spanning segment. Over 337-384 (EITLYNVSAQKVESQSELLFHDWYNCSWYNESREFKFMIKMMLLFSRR) the chain is Cytoplasmic. Residues 385-405 (TFVLSVGGFTSLSHKFLVQVF) traverse the membrane as a helical segment. At 406–421 (RLSANFFLLLRNMNNK) the chain is on the extracellular side.

The protein belongs to the insect chemoreceptor superfamily. Heteromeric odorant receptor channel (TC 1.A.69) family. Or63a subfamily. In terms of assembly, interacts with Orco. Complexes exist early in the endomembrane system in olfactory sensory neurons (OSNs), coupling these complexes to the conserved ciliary trafficking pathway.

It localises to the cell membrane. In terms of biological role, odorant receptor which mediates acceptance or avoidance behavior, depending on its substrates. The odorant receptor repertoire encodes a large collection of odor stimuli that vary widely in identity, intensity, and duration. May form a complex with Orco to form odorant-sensing units, providing sensitive and prolonged odorant signaling and calcium permeability. Involved in the behavioral responses to ethyl acetate, pentyl acetate, methyl caproate, anisole, heptanal, 2-heptanone, r-carvone, nonanoic acid, and pyrazines. This chain is Odorant receptor 67b (Or67b), found in Drosophila melanogaster (Fruit fly).